A 423-amino-acid chain; its full sequence is COP9 signalosome complex subunit 3 (423 aa).

Residues 197–365 enclose the PCI domain; that stretch reads NFERALYFFE…GMVCFHDNPE (169 aa). The interval 402-423 is disordered; the sequence is QFVQKSMGTQEDDVGSKTSSYS.

This sequence belongs to the CSN3 family. In terms of assembly, component of the CSN complex, probably composed of cops1, cops2, cops3, cops4, cops5, cops6, cops7, cops8 and cops9.

The protein localises to the cytoplasm. It localises to the nucleus. Functionally, component of the COP9 signalosome complex (CSN), a complex involved in various cellular and developmental processes. The CSN complex is an essential regulator of the ubiquitin (Ubl) conjugation pathway by mediating the deneddylation of the cullin subunits of E3 ligase complexes, leading to modify the Ubl ligase activity. This Danio rerio (Zebrafish) protein is COP9 signalosome complex subunit 3 (cops3).